The sequence spans 801 residues: Phenylalanine--tRNA ligase beta subunit (801 aa).

In terms of domain architecture, tRNA-binding spans 39–153; the sequence is AEGLSKLVVG…DEAVPGDAIF (115 aa). The 76-residue stretch at 406 to 481 folds into the B5 domain; it reads TEPVEVSTNL…RIYGYDKLPT (76 aa). 4 residues coordinate Mg(2+): Asp459, Asp465, Glu468, and Glu469. The FDX-ACB domain occupies 708 to 801; sequence TKFPAMTRDI…LTEQVGAEVR (94 aa).

This sequence belongs to the phenylalanyl-tRNA synthetase beta subunit family. Type 1 subfamily. Tetramer of two alpha and two beta subunits. The cofactor is Mg(2+).

The protein localises to the cytoplasm. The enzyme catalyses tRNA(Phe) + L-phenylalanine + ATP = L-phenylalanyl-tRNA(Phe) + AMP + diphosphate + H(+). The polypeptide is Phenylalanine--tRNA ligase beta subunit (Streptococcus pyogenes serotype M3 (strain SSI-1)).